Reading from the N-terminus, the 614-residue chain is V-type proton ATPase catalytic subunit A (614 aa).

247 to 254 (GAFGCGKT) lines the ATP pocket.

It belongs to the ATPase alpha/beta chains family. In terms of assembly, V-ATPase is a heteromultimeric enzyme made up of two complexes: the ATP-hydrolytic V1 complex and the proton translocation V0 complex. The V1 complex consists of three catalytic AB heterodimers that form a heterohexamer, three peripheral stalks each consisting of EG heterodimers, one central rotor including subunits D and F, and the regulatory subunits C and H. The proton translocation complex V0 consists of the proton transport subunit a, a ring of proteolipid subunits c9c'', rotary subunit d, subunits e and f, and the accessory subunits VhaAC45 and ATP6AP2.

It carries out the reaction ATP + H2O + 4 H(+)(in) = ADP + phosphate + 5 H(+)(out). ATP hydrolysis occurs at the interface between the nucleotide-binding domains of subunits A and B. ATP hydrolysis triggers a conformational change in the subunits D and F, which induces a shift of subunit d. The c-ring is subsequently rotated and results in a continuous proton translocation across the membrane. Catalytic subunit of the V1 complex of vacuolar(H+)-ATPase (V-ATPase), a multisubunit enzyme composed of a peripheral complex (V1) that hydrolyzes ATP and a membrane integral complex (V0) that translocates protons. V-ATPase is responsible for acidifying and maintaining the pH of intracellular compartments and in some cell types, is targeted to the plasma membrane, where it is responsible for acidifying the extracellular environment. This chain is V-type proton ATPase catalytic subunit A, found in Anopheles gambiae (African malaria mosquito).